Reading from the N-terminus, the 355-residue chain is Uroporphyrinogen decarboxylase (355 aa).

Residues 27–31 (RQAGR), Asp78, Tyr155, Thr210, and His328 each bind substrate.

The protein belongs to the uroporphyrinogen decarboxylase family. As to quaternary structure, homodimer.

It is found in the cytoplasm. It catalyses the reaction uroporphyrinogen III + 4 H(+) = coproporphyrinogen III + 4 CO2. The protein operates within porphyrin-containing compound metabolism; protoporphyrin-IX biosynthesis; coproporphyrinogen-III from 5-aminolevulinate: step 4/4. Functionally, catalyzes the decarboxylation of four acetate groups of uroporphyrinogen-III to yield coproporphyrinogen-III. The polypeptide is Uroporphyrinogen decarboxylase (Pseudomonas fluorescens (strain Pf0-1)).